The primary structure comprises 1043 residues: Peroxisomal ATPase PEX1 (1043 aa).

Residues 453-626 are AAA-cassette D1; that stretch reads ATPAIILDGK…SKNQIMKLNR (174 aa). Residues 461–468 and 738–745 each bind ATP; these read GKQGIGKT and GYPGCGKT. Positions 733 to 926 are AAA-cassette D2; that stretch reads GILLYGYPGC…CYNAYLKSVH (194 aa).

This sequence belongs to the AAA ATPase family. Interacts with PEX6; forming the PEX1-PEX6 AAA ATPase complex, which is composed of a heterohexamer formed by a trimer of PEX1-PEX6 dimers. The PEX1-PEX6 heterooligomers associate with the peroxisomal importomer via interaction of PEX6 with the peroxisomal membrane anchor PEX15.

Its subcellular location is the cytoplasm. The protein resides in the cytosol. The protein localises to the peroxisome membrane. The catalysed reaction is ATP + H2O = ADP + phosphate + H(+). Its function is as follows. Component of the PEX1-PEX6 AAA ATPase complex, a protein dislocase complex that mediates the ATP-dependent extraction of the PEX5 receptor from peroxisomal membranes, an essential step for PEX5 recycling. Specifically recognizes PEX5 monoubiquitinated at 'Cys-6', and pulls it out of the peroxisome lumen through the PEX2-PEX10-PEX12 retrotranslocation channel. Extraction by the PEX1-PEX6 AAA ATPase complex is accompanied by unfolding of the TPR repeats and release of bound cargo from PEX5. The polypeptide is Peroxisomal ATPase PEX1 (Saccharomyces cerevisiae (strain ATCC 204508 / S288c) (Baker's yeast)).